The following is a 101-amino-acid chain: Venom protein 214 (101 aa).

Residues 1-16 form the signal peptide; sequence MIRYVLVIITCFLVAA.

Contains 3 disulfide bonds. In terms of tissue distribution, expressed by the venom gland.

The protein localises to the secreted. The polypeptide is Venom protein 214 (Lychas mucronatus (Chinese swimming scorpion)).